We begin with the raw amino-acid sequence, 211 residues long: Small ribosomal subunit protein uS5 (211 aa).

The interval 1–41 (MPGRERRDGGRSADDNKQNDRNERRGGGRRDDRRNQQQDER) is disordered. In terms of domain architecture, S5 DRBM spans 44–107 (YIERVVTINR…EEARKNFFRV (64 aa)).

The protein belongs to the universal ribosomal protein uS5 family. Part of the 30S ribosomal subunit. Contacts proteins S4 and S8.

Functionally, with S4 and S12 plays an important role in translational accuracy. Located at the back of the 30S subunit body where it stabilizes the conformation of the head with respect to the body. The polypeptide is Small ribosomal subunit protein uS5 (Corynebacterium glutamicum (strain R)).